Here is a 423-residue protein sequence, read N- to C-terminus: Transcription factor IIIB 50 kDa subunit (423 aa).

The TFIIB-type zinc finger occupies 1-34; the sequence is MSKNCPECGSSRVVEDDLYSQKQWVCEDCGSVVS. Residues Cys5, Cys8, Cys26, and Cys29 each coordinate Zn(2+). Residues 171–245 form repeat 2; the sequence is LESFCYDFKL…LARMKYSLMK (75 aa). The segment covering 325–340 has biased composition (low complexity); that stretch reads QTSQYSESELSDSKSS. The interval 325–358 is disordered; it reads QTSQYSESELSDSKSSVQTQCKSPPDEEDEGCEL. Cys373 is subject to Cysteine sulfenic acid (-SOH).

The protein belongs to the TFIIB family. In terms of assembly, component of TFIIIB complexes. Interacts with TBP and forms a ternary complex with TBp and target DNA sequences. In terms of processing, in response to oxidative stress, a Cys-residue is reversibly oxidized to cysteine sulfenic acid. This impairs formation of a ternary complex with TBP and DNA and down-regulates expression of target genes in response to oxidative stress.

The protein localises to the nucleus. General activator of RNA polymerase III transcription. Factor exclusively required for RNA polymerase III transcription of genes with promoter elements upstream of the initiation sites. Contributes to the regulation of gene expression; functions as activator in the absence of oxidative stress. Down-regulates expression of target genes in response to oxidative stress. Overexpression protects cells against apoptosis in response to oxidative stress. The protein is Transcription factor IIIB 50 kDa subunit (brf2) of Danio rerio (Zebrafish).